We begin with the raw amino-acid sequence, 426 residues long: Dihydroorotase (426 aa).

Positions 58 and 60 each coordinate Zn(2+). Substrate is bound by residues 60-62 (HLR) and Asn-92. Residues Asp-150, His-177, and His-230 each coordinate Zn(2+). Position 276 (Asn-276) interacts with substrate. Asp-303 serves as a coordination point for Zn(2+). The active site involves Asp-303. Substrate contacts are provided by residues His-307 and 321–322 (FG).

Belongs to the metallo-dependent hydrolases superfamily. DHOase family. Class I DHOase subfamily. Requires Zn(2+) as cofactor.

It carries out the reaction (S)-dihydroorotate + H2O = N-carbamoyl-L-aspartate + H(+). The protein operates within pyrimidine metabolism; UMP biosynthesis via de novo pathway; (S)-dihydroorotate from bicarbonate: step 3/3. Catalyzes the reversible cyclization of carbamoyl aspartate to dihydroorotate. The chain is Dihydroorotase from Listeria monocytogenes serotype 4b (strain F2365).